Here is a 500-residue protein sequence, read N- to C-terminus: METKLPPASTPTSPSSPGLSPVPPADKVDGFSRRSLRRARPRRSHSSSQFRYQSNQQELTPLPLLKDVPASELHDLLSRKLAQCGVMFDFLDCVADLKGKEVKRAALNELVECVGSTRGVLIEPVYPDIIRMISVNIFRTLPPSENPEFDPEEDEPNLEPSWPHLQLVYEFFLRFLESPDFQPSVAKRYVDQKFVLMLLELFDSEDPREREYLKTILHRVYGKFLGLRAYIRKQCNHIFLRFIYEFEHFNGVAELLEILGSIINGFALPLKTEHKQFLVRVLIPLHSVKSLSVFHAQLAYCVVQFLEKDATLTEHVIRGLLKYWPKTCTQKEVMFLGEVEEILDVIEPSQFVKIQEPLFKQVARCVSSPHFQVAERALYFWNNEYILSLIEDNCHTVLPAVFGTLYQVSKEHWNQTIVSLIYNVLKTFMEMNGKLFDELTASYKLEKQQEQQKARERQELWQGLEELRLRRLQGTQGTQGAREAPLQRFVPQVAATGGQS.

A compositionally biased stretch (low complexity) spans 1-19 (METKLPPASTPTSPSSPGL). Disordered regions lie at residues 1–55 (METK…YQSN) and 474–500 (GTQGTQGAREAPLQRFVPQVAATGGQS). Phosphoserine; by CLK2 occurs at positions 32, 35, 44, 46, 47, and 48. Over residues 34 to 45 (RSLRRARPRRSH) the composition is skewed to basic residues.

Belongs to the phosphatase 2A regulatory subunit B56 family. As to quaternary structure, component of the serine/threonine-protein phosphatase 2A complex (PP2A). This complex consists of a common heterodimeric core enzyme, composed of a 36 kDa catalytic subunit (subunit C) and a 65 kDa constant scaffold subunit (PR65 or subunit A), that associates with a variety of regulatory subunits. Proteins that associate with the core dimer include three families of regulatory subunits B (the R2/B/PR55/B55, R3/B''/PR72/PR130/PR59 and R5/B'/B56 families), the 48 kDa variable regulatory subunit, viral proteins, and cell signaling molecules. Interacts with SGO1. Interacts with AKT1. As to expression, highly expressed in brain.

The protein localises to the nucleus. In terms of biological role, as the regulatory component of the serine/threonine-protein phosphatase 2A (PP2A) holoenzyme, modulates substrate specificity, subcellular localization, and responsiveness to phosphorylation. The phosphorylated form mediates the interaction between PP2A and AKT1, leading to AKT1 dephosphorylation. This chain is Serine/threonine-protein phosphatase 2A 56 kDa regulatory subunit beta isoform (PPP2R5B), found in Oryctolagus cuniculus (Rabbit).